The following is a 194-amino-acid chain: Protein GrpE (194 aa).

The segment covering 1–12 (MNKQKNNRERTP) has biased composition (basic and acidic residues). The tract at residues 1–44 (MNKQKNNRERTPQPEQDTERDEQLTNSHENDIDSAPAAEENDKV) is disordered.

The protein belongs to the GrpE family. As to quaternary structure, homodimer.

The protein resides in the cytoplasm. Participates actively in the response to hyperosmotic and heat shock by preventing the aggregation of stress-denatured proteins, in association with DnaK and GrpE. It is the nucleotide exchange factor for DnaK and may function as a thermosensor. Unfolded proteins bind initially to DnaJ; upon interaction with the DnaJ-bound protein, DnaK hydrolyzes its bound ATP, resulting in the formation of a stable complex. GrpE releases ADP from DnaK; ATP binding to DnaK triggers the release of the substrate protein, thus completing the reaction cycle. Several rounds of ATP-dependent interactions between DnaJ, DnaK and GrpE are required for fully efficient folding. The sequence is that of Protein GrpE from Porphyromonas gingivalis (strain ATCC 33277 / DSM 20709 / CIP 103683 / JCM 12257 / NCTC 11834 / 2561).